Reading from the N-terminus, the 141-residue chain is Hemoglobin subunit alpha (141 aa).

The Globin domain maps to 1–141 (VLSDNDKTNV…VSTVLTSKYR (141 aa)). Phosphoserine is present on S3. K7 carries the N6-succinyllysine modification. At T8 the chain carries Phosphothreonine. K11 is subject to N6-succinyllysine. Position 16 is an N6-acetyllysine; alternate (K16). N6-succinyllysine; alternate is present on K16. At Y24 the chain carries Phosphotyrosine. Position 35 is a phosphoserine (S35). Position 40 is an N6-succinyllysine (K40). H58 lines the O2 pocket. Residue H87 coordinates heme b. Residue S102 is modified to Phosphoserine. T108 is subject to Phosphothreonine. Position 124 is a phosphoserine (S124). Residues T134 and T137 each carry the phosphothreonine modification. Residue S138 is modified to Phosphoserine.

This sequence belongs to the globin family. As to quaternary structure, heterotetramer of two alpha chains and two beta chains. As to expression, red blood cells.

Involved in oxygen transport from the lung to the various peripheral tissues. Its function is as follows. Hemopressin acts as an antagonist peptide of the cannabinoid receptor CNR1. Hemopressin-binding efficiently blocks cannabinoid receptor CNR1 and subsequent signaling. This chain is Hemoglobin subunit alpha (HBA), found in Loxodonta africana (African elephant).